A 740-amino-acid polypeptide reads, in one-letter code: Catalase-peroxidase (740 aa).

Positions 107–229 (WHAAGTYRIH…LAAVQMGLIY (123 aa)) form a cross-link, tryptophyl-tyrosyl-methioninium (Trp-Tyr) (with M-255). Catalysis depends on histidine 108, which acts as the Proton acceptor. Positions 229–255 (YVNPEGPNGNPDPMAAAVDIRETFRRM) form a cross-link, tryptophyl-tyrosyl-methioninium (Tyr-Met) (with W-107). Histidine 270 serves as a coordination point for heme b.

It belongs to the peroxidase family. Peroxidase/catalase subfamily. Homodimer. Heme b serves as cofactor. Post-translationally, formation of the three residue Trp-Tyr-Met cross-link is important for the catalase, but not the peroxidase activity of the enzyme.

It catalyses the reaction H2O2 + AH2 = A + 2 H2O. The catalysed reaction is 2 H2O2 = O2 + 2 H2O. In terms of biological role, bifunctional enzyme with both catalase and broad-spectrum peroxidase activity. May play a role in the intracellular survival of mycobacteria. The sequence is that of Catalase-peroxidase from Mycobacterium bovis (strain ATCC BAA-935 / AF2122/97).